We begin with the raw amino-acid sequence, 703 residues long: Prolyl 3-hydroxylase 2 (703 aa).

The first 21 residues, 1 to 21 (MRESTWVSLLLLLLLPAPQRG), serve as a signal peptide directing secretion. Residues 18-40 (PQRGGPQDGRGSPEPEPERGPLQ) are disordered. 4 TPR repeats span residues 42–75 (FDLLYASGVAAYYSGDYEGAVRDLEAALRSHRRL), 144–177 (RVPYNYLQRAYIKLNQLDKAMEAAHTFFMANPEH), 205–238 (HLESYNAGVKHYEADDFEAAIKYFEQALREYFNE), and 301–334 (PLHYDYLQFAYYRVGEYVKALECAKAYLMFHPDD). N-linked (GlcNAc...) asparagine glycans are attached at residues Asn444, Asn455, and Asn544. A Fe2OG dioxygenase domain is found at 552–666 (THMVCRTALS…RCAVALWFTL (115 aa)). Residues His575, Asp577, and His647 each contribute to the Fe cation site. Residue Arg657 is part of the active site. The Prevents secretion from ER motif lies at 700 to 703 (KDEL).

This sequence belongs to the leprecan family. The cofactor is Fe cation. L-ascorbate is required as a cofactor. As to expression, detected at low levels in cartilage.

The protein localises to the endoplasmic reticulum. It is found in the sarcoplasmic reticulum. Its subcellular location is the golgi apparatus. The catalysed reaction is L-prolyl-[collagen] + 2-oxoglutarate + O2 = trans-3-hydroxy-L-prolyl-[collagen] + succinate + CO2. In terms of biological role, prolyl 3-hydroxylase that catalyzes the post-translational formation of 3-hydroxyproline on collagens. Contributes to proline 3-hydroxylation of collagen COL4A1 and COL1A1 in tendons, the eye sclera and in the eye lens capsule. Has high activity with the type IV collagen COL4A1, and lower activity with COL1A1. Catalyzes hydroxylation of the first Pro in Gly-Pro-Hyp sequences where Hyp is 4-hydroxyproline. Has no activity on substrates that lack 4-hydroxyproline in the third position. The chain is Prolyl 3-hydroxylase 2 from Rattus norvegicus (Rat).